A 447-amino-acid polypeptide reads, in one-letter code: MCLPTIRKIAIIGAGPSGLVTAKALLAEKAFDQVTLFERRGSPGGVWNYTSTLSNKLPVPSTNPILTTEPIVGPAALPVYPSPLYRDLQTNTPIELMGYCDQSFKPQTLQFPHRHTIQEYQRIYAQPLLPFIKLATDVLDIEKKDGSWVVTYKGTKAGSPISKDIFDAVSICNGHYEVPYIPNIKGLDEYAKAVPGSVLHSSLFREPELFVGESVLVVGGASSANDLVRHLTPVAKHPIYQSLLGGGDIQNESLQQVPEITKFDPTTREIYLKGGKVLSNIDRVIYCTGYLYSVPFPSLAKLKSPETKLIDDGSHVHNVYQHIFYIPDPTLAFVGLALHVVPFPTSQAQAAFLARVWSGRLKLPSKEEQLKWQDELMFSLSGANNMYHSLDYPKDATYINKLHDWCKQATPVLEEEFPSPYWGEKERSIRENMWSIRAKFFGIEPPK.

Residues 13 to 17 (GAGPS), Glu-38, 46 to 47 (VW), 91 to 92 (NT), and 137 to 138 (DV) contribute to the FAD site. 90–91 (TN) is an NADP(+) binding site. NADP(+) is bound at residue 223–226 (SAND).

Belongs to the FMO family. In terms of assembly, monomer. It depends on FAD as a cofactor.

Flavin-dependent oxidation of thiol-containing compounds. Probably required for the correct folding of disulfide-bonded proteins. This is Thiol-specific monooxygenase (fmo1) from Schizosaccharomyces pombe (strain 972 / ATCC 24843) (Fission yeast).